The following is a 308-amino-acid chain: Isoaspartyl peptidase/L-asparaginase (308 aa).

M1 bears the N-acetylmethionine mark. T168 acts as the Nucleophile in catalysis. Residues 196–199 (RVGD) and 219–222 (TGHG) contribute to the substrate site.

This sequence belongs to the Ntn-hydrolase family. Heterodimer of an alpha and beta chain produced by autocleavage. This heterodimer may then dimerize in turn, giving rise to a heterotetramer. In terms of processing, cleaved into an alpha and beta chain by autocatalysis; this activates the enzyme. The N-terminal residue of the beta subunit is responsible for the nucleophile hydrolase activity.

The protein localises to the cytoplasm. It catalyses the reaction L-asparagine + H2O = L-aspartate + NH4(+). It carries out the reaction Cleavage of a beta-linked Asp residue from the N-terminus of a polypeptide.. In terms of biological role, has both L-asparaginase and beta-aspartyl peptidase activity. May be involved in the production of L-aspartate, which can act as an excitatory neurotransmitter in some brain regions. Is highly active with L-Asp beta-methyl ester. Besides, has catalytic activity toward beta-aspartyl dipeptides and their methyl esters, including beta-L-Asp-L-Phe, beta-L-Asp-L-Phe methyl ester (aspartame), beta-L-Asp-L-Ala, beta-L-Asp-L-Leu and beta-L-Asp-L-Lys. Does not have aspartylglucosaminidase activity and is inactive toward GlcNAc-L-Asn. Likewise, has no activity toward glutamine. This Bos taurus (Bovine) protein is Isoaspartyl peptidase/L-asparaginase (ASRGL1).